The following is a 320-amino-acid chain: Nucleotide-binding protein Pcryo_0127 (320 aa).

ATP is bound at residue 32–39; the sequence is GRSGSGKT. Position 82–85 (82–85) interacts with GTP; it reads DIRT.

This sequence belongs to the RapZ-like family.

In terms of biological role, displays ATPase and GTPase activities. In Psychrobacter cryohalolentis (strain ATCC BAA-1226 / DSM 17306 / VKM B-2378 / K5), this protein is Nucleotide-binding protein Pcryo_0127.